A 319-amino-acid polypeptide reads, in one-letter code: Annexin A4 (319 aa).

An N-acetylalanine modification is found at Ala-2. Thr-7 is subject to Phosphothreonine. Ser-12 is modified (phosphoserine). Annexin repeat units follow at residues 14-85 (FSAT…GMIT), 86-157 (PTVL…SLSA), 169-241 (ALMR…AIVK), and 245-316 (NKSA…ILCG). Residues Lys-213, Lys-293, and Lys-300 each carry the N6-acetyllysine modification.

The protein belongs to the annexin family. Expressed in pancreas (at protein level). Also detected in liver, spleen, intestine, stomach, kidney, and adrenal glands.

The protein localises to the zymogen granule membrane. Its function is as follows. Calcium/phospholipid-binding protein which promotes membrane fusion and is involved in exocytosis. In Canis lupus familiaris (Dog), this protein is Annexin A4 (ANXA4).